A 372-amino-acid polypeptide reads, in one-letter code: MKSQSIMSVERSAETSLTLEIPTSPLIIKITQQERNILSNVGNLLVKAFGNYENPDYIASLHLHAFQLLPERITRILSQFGSDFSAEQYGAIVFQGLIEVDQDDLGPTPPNWQGADYGKLNKYGFICSLLHGAVPSKPVQYYAQRKGGGLLHAVIPDEKMAATQTGSGSKTDLFVHTEDAFLSNQADFLSFLYLRNEERVPSTLYSIRSHGKMNPVMKKLFEPIYQCPKDANYNDEDVANSGPTASVLYGNRELPFIRFDAAEQIFNENAGQTSEALGNLMDFWDEAKTLINSDYIPNSGDLIFVNNHLCAHGRSAFIAGQRIENGEIIKCERRQMLRMMSKTSLIHIRSVTRTDDPYFIMEEHLGKIFDLD.

The Fe cation site is built by His-176, Glu-178, and His-312.

The protein belongs to the clavaminate synthase family. Requires Fe(2+) as cofactor.

It carries out the reaction L-lysine + 2-oxoglutarate + O2 = (4R)-4-hydroxy-L-lysine + succinate + CO2. Alpha-ketoglutarate-dependent dioxygenase that in vitro catalyzes the regio- and stereoselective hydroxylation of L-lysine, leading to (4R)-4-hydroxy-L-lysine. This chain is L-lysine 4-hydroxylase, found in Flavobacterium sp. (strain CF136).